Reading from the N-terminus, the 276-residue chain is NH(3)-dependent NAD(+) synthetase (276 aa).

43 to 50 (GISGGVDS) contacts ATP. Position 49 (Asp49) interacts with Mg(2+). Deamido-NAD(+) is bound at residue Arg146. Thr166 is an ATP binding site. Glu171 provides a ligand contact to Mg(2+). Residues Lys179 and Asp186 each contribute to the deamido-NAD(+) site. Positions 195 and 217 each coordinate ATP. Position 266 to 267 (266 to 267 (HK)) interacts with deamido-NAD(+).

It belongs to the NAD synthetase family. As to quaternary structure, homodimer.

It carries out the reaction deamido-NAD(+) + NH4(+) + ATP = AMP + diphosphate + NAD(+) + H(+). The protein operates within cofactor biosynthesis; NAD(+) biosynthesis; NAD(+) from deamido-NAD(+) (ammonia route): step 1/1. Catalyzes the ATP-dependent amidation of deamido-NAD to form NAD. Uses ammonia as a nitrogen source. This Shewanella sediminis (strain HAW-EB3) protein is NH(3)-dependent NAD(+) synthetase.